Consider the following 454-residue polypeptide: Tryptophanase (454 aa).

Lys256 carries the post-translational modification N6-(pyridoxal phosphate)lysine.

The protein belongs to the beta-eliminating lyase family. As to quaternary structure, homotetramer. Pyridoxal 5'-phosphate is required as a cofactor.

The enzyme catalyses L-tryptophan + H2O = indole + pyruvate + NH4(+). Its pathway is amino-acid degradation; L-tryptophan degradation via pyruvate pathway; indole and pyruvate from L-tryptophan: step 1/1. The polypeptide is Tryptophanase (tnaA) (Rhodobacter capsulatus (Rhodopseudomonas capsulata)).